A 240-amino-acid polypeptide reads, in one-letter code: Ribonuclease PH (240 aa).

Phosphate is bound by residues R87 and G125 to R127.

It belongs to the RNase PH family. Homohexameric ring arranged as a trimer of dimers.

It carries out the reaction tRNA(n+1) + phosphate = tRNA(n) + a ribonucleoside 5'-diphosphate. Its function is as follows. Phosphorolytic 3'-5' exoribonuclease that plays an important role in tRNA 3'-end maturation. Removes nucleotide residues following the 3'-CCA terminus of tRNAs; can also add nucleotides to the ends of RNA molecules by using nucleoside diphosphates as substrates, but this may not be physiologically important. Probably plays a role in initiation of 16S rRNA degradation (leading to ribosome degradation) during starvation. In Stutzerimonas stutzeri (strain A1501) (Pseudomonas stutzeri), this protein is Ribonuclease PH.